A 267-amino-acid chain; its full sequence is 4-hydroxy-tetrahydrodipicolinate reductase (267 aa).

NAD(+) is bound at residue glycine 10–methionine 15. Position 37 (arginine 37) interacts with NADP(+). NAD(+)-binding positions include glycine 98–threonine 100 and alanine 122–tyrosine 125. Histidine 155 acts as the Proton donor/acceptor in catalysis. A (S)-2,3,4,5-tetrahydrodipicolinate-binding site is contributed by histidine 156. The active-site Proton donor is the lysine 159. Position 165–166 (glycine 165–threonine 166) interacts with (S)-2,3,4,5-tetrahydrodipicolinate.

It belongs to the DapB family.

It localises to the cytoplasm. It catalyses the reaction (S)-2,3,4,5-tetrahydrodipicolinate + NAD(+) + H2O = (2S,4S)-4-hydroxy-2,3,4,5-tetrahydrodipicolinate + NADH + H(+). The enzyme catalyses (S)-2,3,4,5-tetrahydrodipicolinate + NADP(+) + H2O = (2S,4S)-4-hydroxy-2,3,4,5-tetrahydrodipicolinate + NADPH + H(+). The protein operates within amino-acid biosynthesis; L-lysine biosynthesis via DAP pathway; (S)-tetrahydrodipicolinate from L-aspartate: step 4/4. Functionally, catalyzes the conversion of 4-hydroxy-tetrahydrodipicolinate (HTPA) to tetrahydrodipicolinate. The sequence is that of 4-hydroxy-tetrahydrodipicolinate reductase from Pseudoalteromonas translucida (strain TAC 125).